Here is a 238-residue protein sequence, read N- to C-terminus: Modulator of macroautophagy TMEM150B (238 aa).

Residues 1 to 8 (MWNYLSLL) lie on the Cytoplasmic side of the membrane. Residues 9 to 29 (PVILFLWAIAGIWIVFAIAVV) traverse the membrane as a helical segment. N-linked (GlcNAc...) asparagine glycosylation occurs at N30. At 30 to 51 (NGSVDLNEGFPFISICGSYAPQ) the chain is on the extracellular side. A helical membrane pass occupies residues 52 to 72 (SCIFGQVLNIGAALTVWICIV). Residues 73–86 (RHHQLRDWGVKTWQ) lie on the Cytoplasmic side of the membrane. A helical transmembrane segment spans residues 87 to 107 (NQLILWSGILCALGTSIVGNF). Over 108–116 (QDKNQKPTH) the chain is Extracellular. A helical transmembrane segment spans residues 117 to 137 (LAGAFLAFILGNLYFWLQFFL). Over 138-156 (SWWVKGLPQPGPHWIKSLR) the chain is Cytoplasmic. The helical transmembrane segment at 157 to 177 (LSLCSLSTILIVAMIVLHALH) threads the bilayer. Residues 178–186 (MRSASAICE) are Extracellular-facing. A helical membrane pass occupies residues 187–207 (WVVAMLLFMLFGFFAVDFSIL). Topologically, residues 208 to 238 (RGCTLHLHPRLDSSLPQAPSGSPNIQMAQVL) are cytoplasmic.

The protein belongs to the DRAM/TMEM150 family.

Its subcellular location is the cell membrane. The protein resides in the endosome membrane. The protein localises to the cytoplasmic vesicle. It is found in the autophagosome membrane. Functionally, modulator of macroautophagy that causes accumulation of autophagosomes under basal conditions and enhances autophagic flux. Represses cell death and promotes long-term clonogenic survival of cells grown in the absence of glucose in a macroautophagy-independent manner. May have some role in extracellular matrix engulfment or growth factor receptor recycling, both of which can modulate cell survival. The polypeptide is Modulator of macroautophagy TMEM150B (Mus musculus (Mouse)).